The sequence spans 62 residues: Probable tautomerase RSc0807 (62 aa).

The Proton acceptor; via imino nitrogen role is filled by P2.

The protein belongs to the 4-oxalocrotonate tautomerase family.

The sequence is that of Probable tautomerase RSc0807 from Ralstonia nicotianae (strain ATCC BAA-1114 / GMI1000) (Ralstonia solanacearum).